The primary structure comprises 329 residues: Fructose-1,6-bisphosphatase class 1 2 (329 aa).

Residues E92, D111, L113, and D114 each contribute to the Mg(2+) site. Substrate contacts are provided by residues 114 to 117 (DGSS) and N206. E278 lines the Mg(2+) pocket.

This sequence belongs to the FBPase class 1 family. In terms of assembly, homotetramer. Requires Mg(2+) as cofactor.

Its subcellular location is the cytoplasm. It catalyses the reaction beta-D-fructose 1,6-bisphosphate + H2O = beta-D-fructose 6-phosphate + phosphate. Its pathway is carbohydrate biosynthesis; gluconeogenesis. The protein is Fructose-1,6-bisphosphatase class 1 2 of Xanthobacter autotrophicus (strain ATCC BAA-1158 / Py2).